Reading from the N-terminus, the 266-residue chain is Sesquipedalian-1 (266 aa).

A PH domain is found at 17–113; that stretch reads PVDNAGFLYK…WVKALSRASF (97 aa). Positions 165 to 184 are disordered; sequence QPSVAPQRPPPLPPRRRASA. The residue at position 183 (S183) is a Phosphoserine. Residues 191-203 carry the F&amp;H motif; it reads SFAQLHARYGLEV.

It belongs to the sesquipedalian family. Forms homodimers and heterodimers with PHETA2. Interacts with OCRL and INPP5B. Interaction with OCRL may be important for endosomal morphology and function.

It is found in the early endosome. The protein localises to the recycling endosome. The protein resides in the golgi apparatus. Its subcellular location is the trans-Golgi network. It localises to the cytoplasmic vesicle. It is found in the clathrin-coated vesicle. Functionally, plays a role in endocytic trafficking. Required for receptor recycling from endosomes, both to the trans-Golgi network and the plasma membrane. The sequence is that of Sesquipedalian-1 from Mus musculus (Mouse).